The chain runs to 151 residues: tRNA-specific adenosine deaminase (151 aa).

One can recognise a CMP/dCMP-type deaminase domain in the interval Asn-4 to Leu-122. Position 55 (His-55) interacts with Zn(2+). Glu-57 (proton donor) is an active-site residue. Residues Cys-85 and Cys-88 each coordinate Zn(2+).

The protein belongs to the cytidine and deoxycytidylate deaminase family. As to quaternary structure, homodimer. The cofactor is Zn(2+).

The catalysed reaction is adenosine(34) in tRNA + H2O + H(+) = inosine(34) in tRNA + NH4(+). Catalyzes the deamination of adenosine to inosine at the wobble position 34 of tRNA(Arg2). This Buchnera aphidicola subsp. Schizaphis graminum (strain Sg) protein is tRNA-specific adenosine deaminase.